Reading from the N-terminus, the 367-residue chain is NADH-quinone oxidoreductase subunit D (367 aa).

Belongs to the complex I 49 kDa subunit family. NDH-1 is composed of 14 different subunits. Subunits NuoB, C, D, E, F, and G constitute the peripheral sector of the complex.

It localises to the cell membrane. The catalysed reaction is a quinone + NADH + 5 H(+)(in) = a quinol + NAD(+) + 4 H(+)(out). NDH-1 shuttles electrons from NADH, via FMN and iron-sulfur (Fe-S) centers, to quinones in the respiratory chain. The immediate electron acceptor for the enzyme in this species is believed to be ubiquinone. Couples the redox reaction to proton translocation (for every two electrons transferred, four hydrogen ions are translocated across the cytoplasmic membrane), and thus conserves the redox energy in a proton gradient. The polypeptide is NADH-quinone oxidoreductase subunit D (Dehalococcoides mccartyi (strain ATCC BAA-2266 / KCTC 15142 / 195) (Dehalococcoides ethenogenes (strain 195))).